Consider the following 230-residue polypeptide: 2-C-methyl-D-erythritol 4-phosphate cytidylyltransferase (230 aa).

This sequence belongs to the IspD/TarI cytidylyltransferase family. IspD subfamily.

It catalyses the reaction 2-C-methyl-D-erythritol 4-phosphate + CTP + H(+) = 4-CDP-2-C-methyl-D-erythritol + diphosphate. The protein operates within isoprenoid biosynthesis; isopentenyl diphosphate biosynthesis via DXP pathway; isopentenyl diphosphate from 1-deoxy-D-xylulose 5-phosphate: step 2/6. Catalyzes the formation of 4-diphosphocytidyl-2-C-methyl-D-erythritol from CTP and 2-C-methyl-D-erythritol 4-phosphate (MEP). The polypeptide is 2-C-methyl-D-erythritol 4-phosphate cytidylyltransferase (Laribacter hongkongensis (strain HLHK9)).